The primary structure comprises 313 residues: 2,3-dihydroxyphenylpropionate/2,3-dihydroxicinnamic acid 1,2-dioxygenase (313 aa).

Catalysis depends on His-115, which acts as the Proton donor. The active-site Proton acceptor is the His-179.

This sequence belongs to the LigB/MhpB extradiol dioxygenase family. In terms of assembly, homotetramer. It depends on Fe(2+) as a cofactor.

The enzyme catalyses 3-(2,3-dihydroxyphenyl)propanoate + O2 = (2Z,4E)-2-hydroxy-6-oxonona-2,4-dienedioate + H(+). It carries out the reaction (2E)-3-(2,3-dihydroxyphenyl)prop-2-enoate + O2 = (2Z,4E,7E)-2-hydroxy-6-oxonona-2,4,7-trienedioate + H(+). It functions in the pathway aromatic compound metabolism; 3-phenylpropanoate degradation. In terms of biological role, catalyzes the non-heme iron(II)-dependent oxidative cleavage of 2,3-dihydroxyphenylpropionic acid and 2,3-dihydroxicinnamic acid into 2-hydroxy-6-ketononadienedioate and 2-hydroxy-6-ketononatrienedioate, respectively. This is 2,3-dihydroxyphenylpropionate/2,3-dihydroxicinnamic acid 1,2-dioxygenase from Xanthobacter autotrophicus (strain ATCC BAA-1158 / Py2).